The following is a 429-amino-acid chain: Adenylosuccinate synthetase (429 aa).

GTP-binding positions include 12–18 (GDEGKGK) and 40–42 (GHT). D13 (proton acceptor) is an active-site residue. Mg(2+) is bound by residues D13 and G40. IMP is bound by residues 13 to 16 (DEGK), 38 to 41 (NAGH), T129, R143, Q223, T238, and R302. The active-site Proton donor is H41. Residue 298–304 (TVTGRKR) participates in substrate binding. Residues R304, 330–332 (KLD), and 412–414 (STS) each bind GTP.

Belongs to the adenylosuccinate synthetase family. As to quaternary structure, homodimer. Mg(2+) serves as cofactor.

Its subcellular location is the cytoplasm. The catalysed reaction is IMP + L-aspartate + GTP = N(6)-(1,2-dicarboxyethyl)-AMP + GDP + phosphate + 2 H(+). It functions in the pathway purine metabolism; AMP biosynthesis via de novo pathway; AMP from IMP: step 1/2. Its function is as follows. Plays an important role in the de novo pathway of purine nucleotide biosynthesis. Catalyzes the first committed step in the biosynthesis of AMP from IMP. The sequence is that of Adenylosuccinate synthetase from Sphingopyxis alaskensis (strain DSM 13593 / LMG 18877 / RB2256) (Sphingomonas alaskensis).